A 33-amino-acid chain; its full sequence is uncharacterized protein (33 aa).

The disordered stretch occupies residues 1 to 33 (MQPGTGLSFDISQILKQGSDPKQKLPERQAIVL).

This is an uncharacterized protein from Caenorhabditis elegans.